The primary structure comprises 505 residues: Maturase K (505 aa).

It belongs to the intron maturase 2 family. MatK subfamily.

Its subcellular location is the plastid. The protein localises to the chloroplast. In terms of biological role, usually encoded in the trnK tRNA gene intron. Probably assists in splicing its own and other chloroplast group II introns. The chain is Maturase K from Spinacia oleracea (Spinach).